Here is a 312-residue protein sequence, read N- to C-terminus: MSNSIVIQTSSTVIEDMKQQYKQALSPKIPQGGIFMAKVPSCTITAYKSGKVMFQGGRAEAEASRWQTVSQTPKSTVKKSVNSHQYAPPSSIGTMSILGSDEVGTGDYFGPMTVVAVYVDAKQIPLLKELGVKDSKNLNDAQIAEIAKQLLHVVPYSSLVLHNEKYNELFDKGNNQGKLKALLHNKAITNLLAKIAPTKPEGILIDQFTQPDTYYKYLAKQKQVQRENVYFATKGESVHLAVAAASILARYSFVKQFDELSKKAGMQLPKGAGKQVDIAAAKLIQKVGKERLPEFVKVHFANTEKAFRLLKK.

One can recognise an RNase H type-2 domain in the interval 95–312 (MSILGSDEVG…TEKAFRLLKK (218 aa)). A divalent metal cation contacts are provided by Asp-101, Glu-102, and Asp-206.

This sequence belongs to the RNase HII family. RnhC subfamily. Mn(2+) is required as a cofactor. The cofactor is Mg(2+).

It is found in the cytoplasm. The catalysed reaction is Endonucleolytic cleavage to 5'-phosphomonoester.. In terms of biological role, endonuclease that specifically degrades the RNA of RNA-DNA hybrids. The chain is Ribonuclease HIII from Bacillus mycoides (strain KBAB4) (Bacillus weihenstephanensis).